Reading from the N-terminus, the 553-residue chain is Imidazole glycerol phosphate synthase hisHF (553 aa).

Residues T3 to S223 enclose the Glutamine amidotransferase type-1 domain. Catalysis depends on for GATase activity residues C81, H194, and E196. The cyclase stretch occupies residues L232–V553. Active-site residues include D241 and D403.

In the C-terminal section; belongs to the HisA/HisF family.

It catalyses the reaction 5-[(5-phospho-1-deoxy-D-ribulos-1-ylimino)methylamino]-1-(5-phospho-beta-D-ribosyl)imidazole-4-carboxamide + L-glutamine = D-erythro-1-(imidazol-4-yl)glycerol 3-phosphate + 5-amino-1-(5-phospho-beta-D-ribosyl)imidazole-4-carboxamide + L-glutamate + H(+). It carries out the reaction L-glutamine + H2O = L-glutamate + NH4(+). The protein operates within amino-acid biosynthesis; L-histidine biosynthesis; L-histidine from 5-phospho-alpha-D-ribose 1-diphosphate: step 5/9. Functionally, IGPS catalyzes the conversion of PRFAR and glutamine to IGP, AICAR and glutamate. The glutaminase domain produces the ammonia necessary for the cyclase domain to produce IGP and AICAR from PRFAR. The ammonia is channeled to the active site of the cyclase domain. The sequence is that of Imidazole glycerol phosphate synthase hisHF (hisHF) from Emericella nidulans (strain FGSC A4 / ATCC 38163 / CBS 112.46 / NRRL 194 / M139) (Aspergillus nidulans).